The primary structure comprises 236 residues: Leucyl/phenylalanyl-tRNA--protein transferase (236 aa).

It belongs to the L/F-transferase family.

Its subcellular location is the cytoplasm. The enzyme catalyses N-terminal L-lysyl-[protein] + L-leucyl-tRNA(Leu) = N-terminal L-leucyl-L-lysyl-[protein] + tRNA(Leu) + H(+). The catalysed reaction is N-terminal L-arginyl-[protein] + L-leucyl-tRNA(Leu) = N-terminal L-leucyl-L-arginyl-[protein] + tRNA(Leu) + H(+). It catalyses the reaction L-phenylalanyl-tRNA(Phe) + an N-terminal L-alpha-aminoacyl-[protein] = an N-terminal L-phenylalanyl-L-alpha-aminoacyl-[protein] + tRNA(Phe). Its function is as follows. Functions in the N-end rule pathway of protein degradation where it conjugates Leu, Phe and, less efficiently, Met from aminoacyl-tRNAs to the N-termini of proteins containing an N-terminal arginine or lysine. The polypeptide is Leucyl/phenylalanyl-tRNA--protein transferase (Shewanella sp. (strain ANA-3)).